Consider the following 317-residue polypeptide: (R)-citramalyl-CoA lyase (317 aa).

A Pyruvate carboxyltransferase domain is found at Val-4–Ile-281. Arg-12 lines the substrate pocket. A divalent metal cation contacts are provided by Asp-13, His-214, and His-216. Cys-247 is an active-site residue. Residue Asn-256 participates in a divalent metal cation binding.

Belongs to the HMG-CoA lyase family. As to quaternary structure, homodimer. Mn(2+) serves as cofactor. Co(2+) is required as a cofactor. It depends on Ni(2+) as a cofactor. Requires Mg(2+) as cofactor.

It carries out the reaction (3R)-citramalyl-CoA = pyruvate + acetyl-CoA. With respect to regulation, activated by dithioerythritol (DTE) (in vitro). Functionally, involved in the glyoxylate assimilation cycle used to regenerate acetyl-CoA and produce pyruvate as universal precursor for biosynthesis. Catalyzes the cleavage of (R)-citramalyl-CoA to yield acetyl-CoA and pyruvate. The sequence is that of (R)-citramalyl-CoA lyase (ccl) from Chloroflexus aurantiacus (strain ATCC 29366 / DSM 635 / J-10-fl).